Consider the following 1242-residue polypeptide: Structural polyprotein (1242 aa).

The segment at Met-1–Pro-36 is necessary for nucleocapsid assembly and virus assembly. A disordered region spans residues Met-1–Met-104. The tract at residues Leu-37–Lys-70 is host transcription inhibition. A Supraphysiological nuclear export signal motif is present at residues Leu-44 to Leu-51. Over residues Ala-66 to Met-104 the composition is skewed to basic residues. The short motif at Lys-67 to Lys-70 is the Nuclear localization signal element. The binding to the viral RNA stretch occupies residues Lys-83–Thr-113. The ribosome-binding stretch occupies residues Pro-98–Lys-112. Residue Ser-110 is modified to Phosphoserine. The region spanning Lys-112–Trp-261 is the Peptidase S3 domain. Phosphothreonine is present on Thr-113. Catalysis depends on charge relay system residues His-138, Asp-160, and Ser-212. The segment at Ser-262 to Ile-273 is functions as an uncleaved signal peptide for the precursor of protein E3/E2. The N-linked (GlcNAc...) asparagine; by host glycan is linked to Asn-272. Residues Asp-325–Thr-688 are Extracellular-facing. A helical transmembrane segment spans residues Val-689–Leu-709. Over Leu-710–Ala-744 the chain is Cytoplasmic. 3 S-palmitoyl cysteine; by host lipidation sites follow: Cys-717, Cys-737, and Cys-738. Residues Cys-717 to Cys-737 form a transient transmembrane before p62-6K protein processing region. Over Asp-745–Gln-759 the chain is Extracellular. 2 helical membrane passes run Asn-760–Leu-780 and Arg-781–Ala-801. At Tyr-802–Ser-1218 the chain is on the extracellular side. Disulfide bonds link Cys-850–Cys-915, Cys-863–Cys-895, Cys-864–Cys-897, Cys-869–Cys-879, Cys-1061–Cys-1073, Cys-1103–Cys-1178, Cys-1108–Cys-1182, and Cys-1130–Cys-1172. The E1 fusion peptide loop stretch occupies residues Val-885–Thr-902. A helical transmembrane segment spans residues Thr-1219–Thr-1239. Residues His-1240–His-1242 are Cytoplasmic-facing.

In terms of assembly, part of a tetrameric complex composed of host CRM1, host importin alpha/beta dimer and the viral capsid; this complex blocks the receptor-mediated transport through the nuclear pore. Interacts with host phosphatase PPP1CA; this interaction dephosphorylates the capsid protein, which increases its ability to bind to the viral genome. Interacts with host karyopherin KPNA4; this interaction allows the nuclear import of the viral capsid protein. Interacts with spike glycoprotein E2. Interacts with host IRAK1; the interaction leads to inhibition of IRAK1-dependent signaling. The precursor of protein E3/E2 and E1 form a heterodimer shortly after synthesis. As to quaternary structure, the precursor of protein E3/E2 and E1 form a heterodimer shortly after synthesis. Processing of the precursor of protein E3/E2 into E2 and E3 results in a heterodimer of the spike glycoproteins E2 and E1. Spike at virion surface are constituted of three E2-E1 heterodimers. After target cell attachment and endocytosis, E1 change conformation to form homotrimers. Interacts with 6K protein. In terms of assembly, processing of the precursor of protein E3/E2 into E2 and E3 results in a heterodimer of the spike glycoproteins E2 and E1. Spike at virion surface are constituted of three E2-E1 heterodimers. Interacts with 6K protein. Interacts with spike glycoprotein E1. Interacts with spike glycoprotein E2. Structural polyprotein: Specific enzymatic cleavages in vivo yield mature proteins. Capsid protein is auto-cleaved during polyprotein translation, unmasking a signal peptide at the N-terminus of the precursor of E3/E2. The remaining polyprotein is then targeted to the host endoplasmic reticulum, where host signal peptidase cleaves it into pE2, 6K and E1 proteins. pE2 is further processed to mature E3 and E2 by host furin in trans-Golgi vesicle. Post-translationally, phosphorylated on serine and threonine residues. In terms of processing, palmitoylated via thioester bonds. These palmitoylations may induce disruption of the C-terminus transmembrane. This would result in the reorientation of E2 C-terminus from lumenal to cytoplasmic side. N-glycosylated. Post-translationally, palmitoylated via thioester bonds.

The protein resides in the virion. The protein localises to the host cytoplasm. Its subcellular location is the host cell membrane. It localises to the host nucleus. It is found in the virion membrane. The catalysed reaction is Autocatalytic release of the core protein from the N-terminus of the togavirus structural polyprotein by hydrolysis of a -Trp-|-Ser- bond.. Forms an icosahedral capsid with a T=4 symmetry composed of 240 copies of the capsid protein surrounded by a lipid membrane through which penetrate 80 spikes composed of trimers of E1-E2 heterodimers. The capsid protein binds to the viral RNA genome at a site adjacent to a ribosome binding site for viral genome translation following genome release. Possesses a protease activity that results in its autocatalytic cleavage from the nascent structural protein. Following its self-cleavage, the capsid protein transiently associates with ribosomes, and within several minutes the protein binds to viral RNA and rapidly assembles into icosahedric core particles. The resulting nucleocapsid eventually associates with the cytoplasmic domain of the spike glycoprotein E2 at the cell membrane, leading to budding and formation of mature virions. In case of infection, new virions attach to target cells and after clathrin-mediated endocytosis their membrane fuses with the host endosomal membrane. This leads to the release of the nucleocapsid into the cytoplasm, followed by an uncoating event necessary for the genomic RNA to become accessible. The uncoating might be triggered by the interaction of capsid proteins with ribosomes. Binding of ribosomes would release the genomic RNA since the same region is genomic RNA-binding and ribosome-binding. Specifically inhibits interleukin-1 receptor-associated kinase 1/IRAK1-dependent signaling during viral entry, representing a means by which the alphaviruses may evade innate immune detection and activation prior to viral gene expression. Inhibits host transcription. Forms a tetrameric complex with XPO1/CRM1 and the nuclear import receptor importin. This complex blocks the central channel of host nuclear pores thereby inhibiting the receptor-mediated nuclear transport and thus the host mRNA and rRNA transcription. The inhibition of transcription is linked to a cytopathic effect on the host cell. In terms of biological role, provides the signal sequence for the translocation of the precursor of protein E3/E2 to the host endoplasmic reticulum. Furin-cleaved E3 remains associated with spike glycoprotein E1 and mediates pH protection of the latter during the transport via the secretory pathway. After virion release from the host cell, the assembly protein E3 is gradually released in the extracellular space. Functionally, plays a role in viral attachment to target host cell, by binding to the cell receptor. Synthesized as a p62 precursor which is processed by furin at the cell membrane just before virion budding, giving rise to E2-E1 heterodimer. The p62-E1 heterodimer is stable, whereas E2-E1 is unstable and dissociate at low pH. p62 is processed at the last step, presumably to avoid E1 fusion activation before its final export to cell surface. E2 C-terminus contains a transitory transmembrane that would be disrupted by palmitoylation, resulting in reorientation of the C-terminal tail from lumenal to cytoplasmic side. This step is critical since E2 C-terminus is involved in budding by interacting with capsid proteins. This release of E2 C-terminus in cytoplasm occurs lately in protein export, and precludes premature assembly of particles at the endoplasmic reticulum membrane. Its function is as follows. Constitutive membrane protein involved in virus glycoprotein processing, cell permeabilization, and the budding of viral particles. Disrupts the calcium homeostasis of the cell, probably at the endoplasmic reticulum level. This leads to cytoplasmic calcium elevation. Because of its lipophilic properties, the 6K protein is postulated to influence the selection of lipids that interact with the transmembrane domains of the glycoproteins, which, in turn, affects the deformability of the bilayer required for the extreme curvature that occurs as budding proceeds. Present in low amount in virions, about 3% compared to viral glycoproteins. Class II viral fusion protein. Fusion activity is inactive as long as E1 is bound to E2 in mature virion. After virus attachment to target cell and endocytosis, acidification of the endosome would induce dissociation of E1/E2 heterodimer and concomitant trimerization of the E1 subunits. This E1 trimer is fusion active, and promotes release of viral nucleocapsid in cytoplasm after endosome and viral membrane fusion. Efficient fusion requires the presence of cholesterol and sphingolipid in the target membrane. Fusion is optimal at levels of about 1 molecule of cholesterol per 2 molecules of phospholipids, and is specific for sterols containing a 3-beta-hydroxyl group. The chain is Structural polyprotein from Aedes (Human).